Here is a 355-residue protein sequence, read N- to C-terminus: Guanine nucleotide-binding protein G(i) subunit alpha-2 (355 aa).

A lipid anchor (N-myristoyl glycine) is attached at glycine 2. Cysteine 3 is lipidated: S-palmitoyl cysteine. The G-alpha domain occupies 32–355 (REVKLLLLGA…KNNLKDCGLF (324 aa)). Residues 35–48 (KLLLLGAGESGKST) are G1 motif. GTP contacts are provided by residues 40 to 47 (GAGESGKS), 176 to 182 (LRTRVKT), 201 to 205 (DVGGQ), 270 to 273 (NKKD), and alanine 327. Residues serine 47 and threonine 182 each coordinate Mg(2+). The tract at residues 174–182 (DVLRTRVKT) is G2 motif. The G3 motif stretch occupies residues 197–206 (FKMFDVGGQR). Residues 266 to 273 (ILFLNKKD) are G4 motif. The interval 325-330 (TCATDT) is G5 motif.

This sequence belongs to the G-alpha family. G(i/o/t/z) subfamily. G proteins are composed of 3 units; alpha, beta and gamma. The alpha chain contains the guanine nucleotide binding site. In this context, interacts with GNB2. Interacts with UNC5B. Interacts with GPSM1. Interacts with RGS12 and RGS14. Interacts (inactive GDP-bound form) with NUCB1 (via GBA motif); the interaction leads to activation of GNAI3. Interacts (inactive GDP-bound form) with CCDC88C/DAPLE (via GBA motif). Interacts (inactive GDP-bound form) with CCDC8A/GIV (via GBA motif). Interacts with CXCR1 and CXCR2.

It localises to the cytoplasm. It is found in the cytoskeleton. The protein localises to the microtubule organizing center. The protein resides in the centrosome. Its subcellular location is the cell membrane. It localises to the membrane. In terms of biological role, guanine nucleotide-binding proteins (G proteins) are involved as modulators or transducers in various transmembrane signaling systems. The G(i) proteins are involved in hormonal regulation of adenylate cyclase: they inhibit the cyclase in response to beta-adrenergic stimuli. May play a role in cell division. The protein is Guanine nucleotide-binding protein G(i) subunit alpha-2 (GNAI2) of Canis lupus familiaris (Dog).